Reading from the N-terminus, the 94-residue chain is Co-chaperonin GroES (94 aa).

It belongs to the GroES chaperonin family. Heptamer of 7 subunits arranged in a ring. Interacts with the chaperonin GroEL.

The protein localises to the cytoplasm. Functionally, together with the chaperonin GroEL, plays an essential role in assisting protein folding. The GroEL-GroES system forms a nano-cage that allows encapsulation of the non-native substrate proteins and provides a physical environment optimized to promote and accelerate protein folding. GroES binds to the apical surface of the GroEL ring, thereby capping the opening of the GroEL channel. This chain is Co-chaperonin GroES, found in Bacillus subtilis (strain 168).